Here is a 194-residue protein sequence, read N- to C-terminus: Holliday junction branch migration complex subunit RuvA (194 aa).

The domain I stretch occupies residues 1 to 63 (MFEYMKGMIV…EDEAHLYGFV (63 aa)). Residues 64 to 142 (DKEELAMFKK…DSQVEYDQNF (79 aa)) are domain II. A flexible linker region spans residues 143–146 (FNHE). Residues 146–194 (ENKNNNEVVDALMALGYTKHEGEQAASAVRDTSLSTEEMIRKALNWLAR) form a domain III region.

The protein belongs to the RuvA family. Homotetramer. Forms an RuvA(8)-RuvB(12)-Holliday junction (HJ) complex. HJ DNA is sandwiched between 2 RuvA tetramers; dsDNA enters through RuvA and exits via RuvB. An RuvB hexamer assembles on each DNA strand where it exits the tetramer. Each RuvB hexamer is contacted by two RuvA subunits (via domain III) on 2 adjacent RuvB subunits; this complex drives branch migration. In the full resolvosome a probable DNA-RuvA(4)-RuvB(12)-RuvC(2) complex forms which resolves the HJ.

The protein localises to the cytoplasm. Functionally, the RuvA-RuvB-RuvC complex processes Holliday junction (HJ) DNA during genetic recombination and DNA repair, while the RuvA-RuvB complex plays an important role in the rescue of blocked DNA replication forks via replication fork reversal (RFR). RuvA specifically binds to HJ cruciform DNA, conferring on it an open structure. The RuvB hexamer acts as an ATP-dependent pump, pulling dsDNA into and through the RuvAB complex. HJ branch migration allows RuvC to scan DNA until it finds its consensus sequence, where it cleaves and resolves the cruciform DNA. In Alkaliphilus metalliredigens (strain QYMF), this protein is Holliday junction branch migration complex subunit RuvA.